A 93-amino-acid chain; its full sequence is Parbolysin P3 (93 aa).

3 disulfides stabilise this stretch: Cys-16–Cys-37, Cys-22–Cys-33, and Cys-47–Cys-60.

It belongs to the worm cytolysin family. As to expression, localized within the skin and proboscis and are most readily isolated from body mucus secretions.

The protein resides in the secreted. Functionally, cytolysin that shows hemolytic activity (on bovine erythrocytes, HC(50)=5.75 mg/ml). This hemolytic activity is completely inhibited by small unilamelar vesicles composed of PC/PG, PC/PI and PC/PS in 1:1 molar ratios (with at least 100 mg/ml concentration). The sequence is that of Parbolysin P3 from Parborlasia corrugatus (Antarctic nemertean worm).